Reading from the N-terminus, the 341-residue chain is DER1-like family member protein 1 (341 aa).

At 1–41 (MAGPRNVRTLHGNGGRNNDVMGPKEFWLNIPPITRTLFTLA) the chain is on the cytoplasmic side. A helical membrane pass occupies residues 42–62 (IVMTIVGRLNLINPWYFIYVW). Topologically, residues 63 to 122 (NLTFKKVQIWRLLTSCVMLSSRAMPALMELYSIYDRSSQLERGHFGPGLSNRRGPMVTVD) are lumenal. The helical transmembrane segment at 123–143 (YAYYLCFCILAITTATTIIYG) threads the bilayer. The Cytoplasmic segment spans residues 144-170 (SYYPVVLTSGFISCITYTWSIDNANVQ). Residues 171 to 191 (IMFYGLIPVWGKYFPLIQLFI) traverse the membrane as a helical segment. A topological domain (lumenal) is located at residue Ser-192. Residues 193-213 (FVFNEGDFVISLIGFTTGYLY) form a helical membrane-spanning segment. Over 214–341 (TCLDTHTLGP…GQTNSPSDSQ (128 aa)) the chain is Cytoplasmic. 2 stretches are compositionally biased toward polar residues: residues 276–286 (SSQRETRTFSG) and 296–341 (ATLS…SDSQ). The segment at 276–341 (SSQRETRTFS…GQTNSPSDSQ (66 aa)) is disordered.

The protein belongs to the derlin family.

The protein resides in the endoplasmic reticulum membrane. Functionally, may be involved in the degradation process of some misfolded endoplasmic reticulum (ER) luminal proteins. Its precise role is however unclear and its inability to complement der1 mutations, suggests either that it is not involved in degradation process of misfolded proteins, or that it participates in the destruction of specific misfolded ER luminal proteins. This is DER1-like family member protein 1 (DFM1) from Saccharomyces cerevisiae (strain ATCC 204508 / S288c) (Baker's yeast).